A 469-amino-acid polypeptide reads, in one-letter code: MFQNADDVKKFIADEDVKFVDVRFCDLPGVMQHFTLPATAFDPDAEQAFDGSSIRGFQAIHESDMSLRPDLSTARVDPFRRDKTLNINFFIHDPITGEQYSRDPRNVAKKAEAYLASTGIADTAFFGPEAEFYVFDSVRFATRENESFYHIDSEAGAWNTGALEDNRGYKVRYKGGYFPVPPVDHFADLRAEISLELERSGLQVERQHHEVGTAGQAEINYKFNTLLAAADDLQLFKYIVKNVAWKNGKTATFMPKPIFGDNGSGMHVHQSLWSGGEPLFYDEQGYAGLSDTARYYIGGILKHAPSLLAFTNPTVNSYHRLVPGFEAPVNLVYSQRNRSAAMRIPITGSNPKAKRVEFRAPDASGNPYLAFSALLLAGLDGIKNKIEPAEPIDKDLYELAPEEHANVAQVPTSLGAVLDRLEADHEFLLQGDVFTPDLIETWIDFKRANEIAPLQLRPHPHEFEMYFDV.

In terms of domain architecture, GS beta-grasp spans 15-96 (EDVKFVDVRF…INFFIHDPIT (82 aa)). Positions 104–469 (PRNVAKKAEA…PHEFEMYFDV (366 aa)) constitute a GS catalytic domain. Mg(2+) is bound by residues glutamate 129 and glutamate 131. Glutamate 205 contributes to the ATP binding site. Glutamate 210 and glutamate 218 together coordinate Mg(2+). 221-223 (YKF) is a binding site for ATP. Residues 262 to 263 (NG) and glycine 263 each bind L-glutamate. Mg(2+) is bound at residue histidine 267. Residues 269-271 (HQS) and serine 271 contribute to the ATP site. L-glutamate is bound by residues arginine 320, glutamate 326, and arginine 338. ATP-binding residues include arginine 338, arginine 343, and lysine 352. Mg(2+) is bound at residue glutamate 357. Arginine 359 serves as a coordination point for L-glutamate. An O-AMP-tyrosine modification is found at tyrosine 397.

The protein belongs to the glutamine synthetase family. In terms of assembly, oligomer of 12 subunits arranged in the form of two hexagons. Mg(2+) serves as cofactor.

The protein localises to the cytoplasm. It catalyses the reaction L-glutamate + NH4(+) + ATP = L-glutamine + ADP + phosphate + H(+). The activity of this enzyme could be controlled by adenylation under conditions of abundant glutamine. Functionally, catalyzes the ATP-dependent biosynthesis of glutamine from glutamate and ammonia. Complements L-glutamine auxotrophy of an E.coli glnA mutant. The polypeptide is Glutamine synthetase (Streptomyces coelicolor (strain ATCC BAA-471 / A3(2) / M145)).